The primary structure comprises 250 residues: Manganese transport system ATP-binding protein MntB (250 aa).

Positions 5-236 constitute an ABC transporter domain; that stretch reads VKVDNLSVFY…MVAKTYQGNL (232 aa). Position 37–44 (37–44) interacts with ATP; it reads GPNGAGKS.

The protein belongs to the ABC transporter superfamily.

It is found in the cell membrane. Functionally, this protein is probably a component of a manganese permease, a binding protein-dependent, ATP-driven transport system. Probably responsible for energy coupling to the transport system. The sequence is that of Manganese transport system ATP-binding protein MntB (mntB) from Halalkalibacterium halodurans (strain ATCC BAA-125 / DSM 18197 / FERM 7344 / JCM 9153 / C-125) (Bacillus halodurans).